We begin with the raw amino-acid sequence, 1137 residues long: Phytochrome C (1137 aa).

Positions 1 to 18 (MSSSRSNNRATCSRSSSA) are enriched in low complexity. Residues 1–27 (MSSSRSNNRATCSRSSSARSKHSARVV) are disordered. The 184-residue stretch at 217–400 (NLSLLCDVLV…VFGIQINKEV (184 aa)) folds into the GAF domain. Cys322 contacts phytochromobilin. 2 consecutive PAS domains span residues 620 to 690 (VTNE…LQGI) and 750 to 824 (IQGD…TKLS). Residues 904 to 1124 (YIRQELRNPL…IVLVEFPVAQ (221 aa)) form the Histidine kinase domain.

The protein belongs to the phytochrome family. Homodimer. Contains one covalently linked phytochromobilin chromophore.

Regulatory photoreceptor which exists in two forms that are reversibly interconvertible by light: the Pr form that absorbs maximally in the red region of the spectrum and the Pfr form that absorbs maximally in the far-red region. Photoconversion of Pr to Pfr induces an array of morphogenic responses, whereas reconversion of Pfr to Pr cancels the induction of those responses. Pfr controls the expression of a number of nuclear genes including those encoding the small subunit of ribulose-bisphosphate carboxylase, chlorophyll A/B binding protein, protochlorophyllide reductase, rRNA, etc. It also controls the expression of its own gene(s) in a negative feedback fashion. This Oryza sativa subsp. japonica (Rice) protein is Phytochrome C (PHYC).